The primary structure comprises 195 residues: Protein GrpE (195 aa).

This sequence belongs to the GrpE family. In terms of assembly, homodimer.

Its subcellular location is the cytoplasm. Its function is as follows. Participates actively in the response to hyperosmotic and heat shock by preventing the aggregation of stress-denatured proteins, in association with DnaK and GrpE. It is the nucleotide exchange factor for DnaK and may function as a thermosensor. Unfolded proteins bind initially to DnaJ; upon interaction with the DnaJ-bound protein, DnaK hydrolyzes its bound ATP, resulting in the formation of a stable complex. GrpE releases ADP from DnaK; ATP binding to DnaK triggers the release of the substrate protein, thus completing the reaction cycle. Several rounds of ATP-dependent interactions between DnaJ, DnaK and GrpE are required for fully efficient folding. This is Protein GrpE from Blochmanniella pennsylvanica (strain BPEN).